The primary structure comprises 540 residues: Raucaffricine-O-beta-D-glucosidase (540 aa).

A beta-D-glucoside-binding positions include Gln-36, His-140, and 185 to 186 (NE). The active-site Proton donor is Glu-186. Cysteines 221 and 230 form a disulfide. Residues Tyr-347, Glu-420, Trp-469, 476 to 477 (EW), and Phe-485 contribute to the a beta-D-glucoside site. Glu-420 (nucleophile) is an active-site residue.

Belongs to the glycosyl hydrolase 1 family.

It catalyses the reaction raucaffricine + H2O = vomilenine + D-glucose. It carries out the reaction vomilenine + UDP-alpha-D-glucose = raucaffricine + UDP + H(+). In terms of biological role, glucosidase specifically involved in alkaloid biosynthesis leading to the accumulation of several alkaloids, including ajmaline, an important plant-derived pharmaceutical used in the treatment of heart disorders. The sequence is that of Raucaffricine-O-beta-D-glucosidase from Rauvolfia serpentina (Serpentine wood).